Consider the following 263-residue polypeptide: Lens fiber major intrinsic protein (263 aa).

The Cytoplasmic segment spans residues 1–9 (MWEFRSFSF). Residues 10–29 (WRAVFAEFFGTMFYVFFGLG) traverse the membrane as a helical segment. The Extracellular portion of the chain corresponds to 30-41 (ASLKWAAGPANV). A helical membrane pass occupies residues 42–59 (LVIALAFGLVLATMVQSI). The Cytoplasmic portion of the chain corresponds to 60 to 61 (GH). An intramembrane region (discontinuously helical) is located at residues 62-77 (VSGAHINPAVTFAFLI). The short motif at 68–70 (NPA) is the NPA 1 element. At 78–82 (GSQMS) the chain is on the cytoplasmic side. The helical transmembrane segment at 83-106 (LFRAIFYIAAQLLGAVAGAAVLYG) threads the bilayer. Over 107–127 (VTPAAIRGNLALNTLHPGVSL) the chain is Extracellular. A helical transmembrane segment spans residues 128 to 148 (GQATTVEIFLTLQFVLCIFAT). Over 149-156 (YDERRNGR) the chain is Cytoplasmic. A helical membrane pass occupies residues 157-175 (LGSVSLAIGFSLTLGHLFG). Residues 176-178 (LYY) are Extracellular-facing. An intramembrane region (discontinuously helical) is located at residues 179-193 (TGASMNPARSFAPAV). An NPA 2 motif is present at residues 184–186 (NPA). The Extracellular segment spans residues 194–200 (LTRNFTN). The chain crosses the membrane as a helical span at residues 201–222 (HWVYWVGPIIGGALGGLVYDFI). The Cytoplasmic segment spans residues 223–263 (LFPRMRGLSERLSILKGARPAEPEGQQEATGEPIELKTQSL). The tract at residues 227–237 (MRGLSERLSIL) is interaction with CALM. The disordered stretch occupies residues 241–263 (RPAEPEGQQEATGEPIELKTQSL).

This sequence belongs to the MIP/aquaporin (TC 1.A.8) family. In terms of assembly, homotetramer; each monomer provides an independent water pore. Two homotetramers on opposing membranes can dimerize, forming a cell-cell junction. Interacts with CALM; the calcium-calmodulin/CALM complex interacts with the cytoplasmic domains of two aquaporins, leading to channel closure.

The protein localises to the cell membrane. The protein resides in the cell junction. The catalysed reaction is H2O(in) = H2O(out). The water channel activity is inhibited by calcium through calmodulin/CALM. Aquaporins form homotetrameric transmembrane channels, with each monomer independently mediating water transport across the plasma membrane along its osmotic gradient. Specifically expressed in lens fiber cells, this aquaporin is crucial for maintaining lens water homeostasis and transparency. Beyond water permeability, it also acts as a cell-to-cell adhesion molecule, forming thin junctions between lens fiber cells that are essential for maintaining the ordered structure and transparency of the lens. This is Lens fiber major intrinsic protein from Lithobates pipiens (Northern leopard frog).